The following is a 323-amino-acid chain: Aspartate carbamoyltransferase catalytic subunit (323 aa).

Residues arginine 71 and threonine 72 each coordinate carbamoyl phosphate. An L-aspartate-binding site is contributed by lysine 99. Carbamoyl phosphate is bound by residues arginine 121, histidine 151, and glutamine 154. Residues arginine 184 and arginine 239 each contribute to the L-aspartate site. Carbamoyl phosphate contacts are provided by glycine 280 and proline 281.

Belongs to the aspartate/ornithine carbamoyltransferase superfamily. ATCase family. As to quaternary structure, heterododecamer (2C3:3R2) of six catalytic PyrB chains organized as two trimers (C3), and six regulatory PyrI chains organized as three dimers (R2).

The catalysed reaction is carbamoyl phosphate + L-aspartate = N-carbamoyl-L-aspartate + phosphate + H(+). It participates in pyrimidine metabolism; UMP biosynthesis via de novo pathway; (S)-dihydroorotate from bicarbonate: step 2/3. In terms of biological role, catalyzes the condensation of carbamoyl phosphate and aspartate to form carbamoyl aspartate and inorganic phosphate, the committed step in the de novo pyrimidine nucleotide biosynthesis pathway. The chain is Aspartate carbamoyltransferase catalytic subunit from Cupriavidus pinatubonensis (strain JMP 134 / LMG 1197) (Cupriavidus necator (strain JMP 134)).